A 503-amino-acid polypeptide reads, in one-letter code: Cytochrome P450 monooxygenase ecdH (503 aa).

A helical transmembrane segment spans residues 8–24 (TTLLCGVISSTLLLLLL). 3 N-linked (GlcNAc...) asparagine glycosylation sites follow: N64, N324, and N413. A heme-binding site is contributed by C449.

Belongs to the cytochrome P450 family. It depends on heme as a cofactor.

The protein resides in the membrane. It functions in the pathway antifungal biosynthesis. Its function is as follows. Cytochrome P450 monooxygenase; part of the gene cluster that mediates the biosynthesis of echinocandin B, a fungal lipidated cyclic hexapeptide that acts as an antifungal agent. Linoleoyl-AMP, produced by the fatty-acyl-AMP ligase ecdI, is transferred to the initiation carrier domain (T0) of ecdA. The linoleoyl-S-phosphopantetheinyl-T0 is sequentially extended with L-ornithine, L-threonine, L-proline, L-homotyrosine, L-threonine, and 4R-methyl-L-proline to form the linear hexapeptide. Thereafter, the terminal condensation (C7) performs macrocyclization of the NRPS product and the cyclic scaffold is released from ecdA. All six of the amino acid residues are hydroxylated, including 4R,5R-dihydroxy-L-ornithine, 4R-hydroxyl-L-proline, 3S,4S-dihydroxy-L-homotyrosine, and 3S-hydroxyl-4S-methyl-L-prolin. In the pathway, all the hydroxylation reactions are proposed to occur following completion of the cyclic peptide, so the unhydroxylated precursor produced by ecdA will undergo six rounds of hydroxylation. Five hydroxylase genes (ecdG, ecdH, ecdK, htyE and htyF) are embedded within the echinocandin B (ecd) and L-homotyrosine (hty) clusters. The polypeptide is Cytochrome P450 monooxygenase ecdH (Aspergillus rugulosus (Emericella rugulosa)).